Reading from the N-terminus, the 1371-residue chain is F-actin-uncapping protein LRRC16A (1371 aa).

Met1 is subject to N-acetylmethionine. The residue at position 122 (Ser122) is a Phosphoserine. 10 LRR repeats span residues 245–269 (SNRL…LASA), 275–298 (NSGL…SLSI), 304–327 (PKGL…SLSQ), 336–363 (ASTL…FLAQ), 391–418 (LQYL…SFKQ), 423–447 (SLAL…LLLG), 481–506 (IHNI…VWLS), 543–566 (ESPL…IINA), 570–593 (NTSL…MLAK), and 654–678 (LQKI…AYRL). Residues 710-734 (GDAIQEDLKSAERLMRDAKNSKTLL) adopt a coiled-coil conformation. Position 916 is a phosphothreonine (Thr916). 3 disordered regions span residues 957 to 1000 (PFPS…QPTQ), 1036 to 1159 (KMDS…RRYG), and 1172 to 1371 (KAKQ…FIFV). One copy of the LRR 11 repeat lies at 958 to 981 (FPSLRQEKRSSGFISELPSEEGKK). The inhibits capping activity of CAPZA2 stretch occupies residues 958–1082 (FPSLRQEKRS…LIKSRSKSER (125 aa)). Ser968 is modified (phosphoserine). Composition is skewed to basic and acidic residues over residues 977 to 986 (EEGKKLEHFT) and 1036 to 1061 (KMDS…EKKK). Residues 1055-1089 (GGDEKKKRDSRKSSGFLNLIKSRSKSERPPTILMT) are necessary for localization at the cell membrane. A phosphoserine mark is found at Ser1067 and Ser1094. Composition is skewed to basic and acidic residues over residues 1106 to 1130 (CPRK…KTPD) and 1139 to 1148 (EIGKVERSDS). Over residues 1190–1199 (AVSQDSSSPA) the composition is skewed to polar residues. Thr1228 is subject to Phosphothreonine. Positions 1231–1243 (KNTKAEPKAEAGS) are enriched in basic and acidic residues. Residues 1244–1265 (RSRSSSSTPTSPKPLLQSPKPS) show a composition bias toward low complexity. Ser1280, Ser1288, Ser1291, Ser1315, Ser1324, and Ser1331 each carry phosphoserine. Positions 1313 to 1326 (QSSPQPSPRTFSQE) are enriched in polar residues. Residues 1340–1353 (QEQKQRSSSKDGHQ) are compositionally biased toward basic and acidic residues. Phosphoserine is present on Ser1360.

This sequence belongs to the CARMIL family. Homodimer. Interacts (via C-terminus) with heterodimer capping protein (CP); this interaction uncaps barbed ends capped by CP, enhances barbed-end actin polymerization and promotes lamellipodial formation and cell migration. Interacts with heterodimer capping protein (CP). Interacts with MYO1E. Interacts with TRIO. In terms of tissue distribution, expressed in lung, placenta, small intestine, liver, thymus, colon, skeletal muscle, heart and brain. Higher expression in kidney.

The protein resides in the cytoplasm. It is found in the cytoskeleton. Its subcellular location is the cell membrane. It localises to the cell projection. The protein localises to the lamellipodium. In terms of biological role, cell membrane-cytoskeleton-associated protein that plays a role in the regulation of actin polymerization at the barbed end of actin filaments. Prevents F-actin heterodimeric capping protein (CP) activity at the leading edges of migrating cells, and hence generates uncapped barbed ends and enhances actin polymerization, however, seems unable to nucleate filaments. Plays a role in lamellipodial protrusion formations and cell migration. This chain is F-actin-uncapping protein LRRC16A, found in Homo sapiens (Human).